Here is a 286-residue protein sequence, read N- to C-terminus: Small ribosomal subunit protein uS2 (286 aa).

Residues 231–286 (ERAQAEAKAAAGDNDAPVSSEGESTEVASDAASTASETTATSSDESAAESSEAESK) are disordered. The segment covering 255 to 280 (TEVASDAASTASETTATSSDESAAES) has biased composition (low complexity).

It belongs to the universal ribosomal protein uS2 family.

The sequence is that of Small ribosomal subunit protein uS2 from Corynebacterium kroppenstedtii (strain DSM 44385 / JCM 11950 / CIP 105744 / CCUG 35717).